A 75-amino-acid chain; its full sequence is Small ribosomal subunit protein bS18 (75 aa).

Belongs to the bacterial ribosomal protein bS18 family. In terms of assembly, part of the 30S ribosomal subunit. Forms a tight heterodimer with protein bS6.

Its function is as follows. Binds as a heterodimer with protein bS6 to the central domain of the 16S rRNA, where it helps stabilize the platform of the 30S subunit. In Shewanella frigidimarina (strain NCIMB 400), this protein is Small ribosomal subunit protein bS18.